Here is a 226-residue protein sequence, read N- to C-terminus: Urease accessory protein UreF (226 aa).

This sequence belongs to the UreF family. As to quaternary structure, ureD, UreF and UreG form a complex that acts as a GTP-hydrolysis-dependent molecular chaperone, activating the urease apoprotein by helping to assemble the nickel containing metallocenter of UreC. The UreE protein probably delivers the nickel.

It is found in the cytoplasm. Its function is as follows. Required for maturation of urease via the functional incorporation of the urease nickel metallocenter. The polypeptide is Urease accessory protein UreF (Burkholderia cenocepacia (strain ATCC BAA-245 / DSM 16553 / LMG 16656 / NCTC 13227 / J2315 / CF5610) (Burkholderia cepacia (strain J2315))).